A 182-amino-acid polypeptide reads, in one-letter code: Isopentenyl-diphosphate Delta-isomerase (182 aa).

The Mn(2+) site is built by H25 and H32. The active site involves C67. H69 lines the Mn(2+) pocket. Residue E87 coordinates Mg(2+). The Mn(2+) site is built by E114 and E116. Residue E116 is part of the active site.

Belongs to the IPP isomerase type 1 family. In terms of assembly, homodimer. Mg(2+) is required as a cofactor. It depends on Mn(2+) as a cofactor.

Its subcellular location is the cytoplasm. It catalyses the reaction isopentenyl diphosphate = dimethylallyl diphosphate. It participates in isoprenoid biosynthesis; dimethylallyl diphosphate biosynthesis; dimethylallyl diphosphate from isopentenyl diphosphate: step 1/1. Catalyzes the 1,3-allylic rearrangement of the homoallylic substrate isopentenyl (IPP) to its highly electrophilic allylic isomer, dimethylallyl diphosphate (DMAPP). This chain is Isopentenyl-diphosphate Delta-isomerase, found in Escherichia coli (strain K12 / MC4100 / BW2952).